We begin with the raw amino-acid sequence, 552 residues long: Glutamine-dependent NAD(+) synthetase (552 aa).

The CN hydrolase domain maps to 11 to 253 (LRIAMAQFDF…DQWLVVDYAA (243 aa)). Catalysis depends on E52, which acts as the Proton acceptor; for glutaminase activity. Residue K119 is the For glutaminase activity of the active site. Residue Y125 participates in L-glutamine binding. C157 serves as the catalytic Nucleophile; for glutaminase activity. L-glutamine contacts are provided by S183 and K189. The segment at 275-552 (AWRAVVRGLK…YPITNGYSGQ (278 aa)) is ligase. Residue 298–305 (GLSGGIDS) participates in ATP binding. Position 381 (N381) interacts with deamido-NAD(+). Position 405 (T405) interacts with ATP. Deamido-NAD(+) contacts are provided by E410 and K522.

It in the C-terminal section; belongs to the NAD synthetase family.

The catalysed reaction is deamido-NAD(+) + L-glutamine + ATP + H2O = L-glutamate + AMP + diphosphate + NAD(+) + H(+). It participates in cofactor biosynthesis; NAD(+) biosynthesis; NAD(+) from deamido-NAD(+) (L-Gln route): step 1/1. Its function is as follows. Catalyzes the ATP-dependent amidation of deamido-NAD to form NAD. Uses L-glutamine as a nitrogen source. In Xanthomonas campestris pv. campestris (strain 8004), this protein is Glutamine-dependent NAD(+) synthetase.